The primary structure comprises 333 residues: Antimicrobial peptides (333 aa).

The N-terminal stretch at 1 to 23 (MVQKGVVFGVLLILFICSTLTSA) is a signal peptide. Positions 23-52 (ADSKPNPTKEEEPAKKPDEVSVKSGGPEVS) are disordered. Positions 24–54 (DSKPNPTKEEEPAKKPDEVSVKSGGPEVSED) are cleaved as a propeptide — acidic peptide 1. Basic and acidic residues predominate over residues 29 to 43 (PTKEEEPAKKPDEVS). Pyrrolidone carboxylic acid is present on Gln55. Cystine bridges form between Cys60-Cys70 and Cys61-Cys74. Positions 75–102 (ANAEEAAAAIPEASEELAQEEAPVYSED) are cleaved as a propeptide — acidic peptide 2. Residue Gln103 is modified to Pyrrolidone carboxylic acid. Cystine bridges form between Cys108/Cys118 and Cys109/Cys122. A propeptide spans 123-148 (QNAEEAAAAIPEATEKAQEAPVYSED) (acidic peptide 3). A Pyrrolidone carboxylic acid modification is found at Gln149. 2 disulfide bridges follow: Cys154–Cys164 and Cys155–Cys168. Residues 169–196 (QNAEEAAAAVAIPEASEKAQEGPVYSED) constitute a propeptide, acidic peptide 4. The residue at position 197 (Gln197) is a Pyrrolidone carboxylic acid. Cystine bridges form between Cys202/Cys212 and Cys203/Cys216. The propeptide at 217–232 (SNAADEVATPEDVEPG) is acidic peptide 5. Residue Gln233 is modified to Pyrrolidone carboxylic acid. Intrachain disulfides connect Cys238–Cys248 and Cys239–Cys252. A propeptide spans 253–278 (HNAAEEATLKAFEEEAAREQPVYSED) (acidic peptide 6). Pyrrolidone carboxylic acid is present on Gln279. Intrachain disulfides connect Cys284–Cys294 and Cys285–Cys298. The propeptide at 299–333 (QSAEEAAAFQAGEVTASLMLIMFKACPCMGPVPSV) is acidic peptide 7.

In terms of processing, the N-terminal of all peptides are blocked. Post-translationally, the 4 cysteine residues of all peptides are involved in intrachain disulfide bonds.

It localises to the secreted. Functionally, plays a role in the defense of the germinating seed against microorganisms, by inhibiting the growth of a range of filamentous fungi and bacteria, especially Gram-positive bacteria. Not cytotoxic for cultured human cells and are the smallest known plant-derived antimicrobial peptides. Peptide IB-AMP4 has a higher antifungal activity than IB-AMP1. In Impatiens balsamina (Balsam), this protein is Antimicrobial peptides (AMP).